Reading from the N-terminus, the 337-residue chain is Phenylalanine--tRNA ligase alpha subunit (337 aa).

Glutamate 252 contacts Mg(2+).

The protein belongs to the class-II aminoacyl-tRNA synthetase family. Phe-tRNA synthetase alpha subunit type 1 subfamily. In terms of assembly, tetramer of two alpha and two beta subunits. The cofactor is Mg(2+).

The protein resides in the cytoplasm. It catalyses the reaction tRNA(Phe) + L-phenylalanine + ATP = L-phenylalanyl-tRNA(Phe) + AMP + diphosphate + H(+). In Francisella philomiragia subsp. philomiragia (strain ATCC 25017 / CCUG 19701 / FSC 153 / O#319-036), this protein is Phenylalanine--tRNA ligase alpha subunit.